We begin with the raw amino-acid sequence, 126 residues long: Protein ApaG (126 aa).

The 125-residue stretch at 2-126 folds into the ApaG domain; sequence SALDDSIRVE…FRLALPGLLH (125 aa).

This Shewanella sp. (strain ANA-3) protein is Protein ApaG.